We begin with the raw amino-acid sequence, 561 residues long: Guanine nucleotide-binding protein-like 3 (561 aa).

Residues 28–46 show a composition bias toward basic residues; the sequence is HNRKLKKAAKKQGISRKAK. Disordered regions lie at residues 28-58 and 76-110; these read HNRK…APFK and KEQN…KKAK. The stretch at 53-98 forms a coiled coil; sequence NSAPFKEEVLREAEQRKQELETLKEQNKIVKQQEKAAKRKKEKDAA. Residues 76–88 are compositionally biased toward basic and acidic residues; that stretch reads KEQNKIVKQQEKA. The region spanning 133 to 319 is the CP-type G domain; sequence CQELNKVIEA…MIDSPGILAA (187 aa). GTP is bound by residues 181 to 184, 268 to 275, and 312 to 315; these read NKID, GFPNVGKS, and DSPG. The interval 486-532 is disordered; that stretch reads ATTTDAEEEKMDTTTNTDEPEAESHISSTVEPIQEPTEKRKDKPAKE. Residues 521–532 show a composition bias toward basic and acidic residues; that stretch reads PTEKRKDKPAKE.

The protein belongs to the TRAFAC class YlqF/YawG GTPase family.

The protein localises to the nucleus. It localises to the nucleolus. In terms of biological role, may play a role in regulating cellular proliferation. The polypeptide is Guanine nucleotide-binding protein-like 3 (gnl3) (Danio rerio (Zebrafish)).